The chain runs to 434 residues: 3-phosphoshikimate 1-carboxyvinyltransferase (434 aa).

Residues Lys15, Ser16, and Arg20 each contribute to the 3-phosphoshikimate site. Lys15 contributes to the phosphoenolpyruvate binding site. Residues Gly96 and Arg124 each contribute to the phosphoenolpyruvate site. 3-phosphoshikimate contacts are provided by Ser169, Gln171, Ser195, Asp319, and Lys346. Gln171 contributes to the phosphoenolpyruvate binding site. The active-site Proton acceptor is Asp319. Residues Arg350 and Arg394 each coordinate phosphoenolpyruvate.

The protein belongs to the EPSP synthase family. As to quaternary structure, monomer.

It localises to the cytoplasm. It catalyses the reaction 3-phosphoshikimate + phosphoenolpyruvate = 5-O-(1-carboxyvinyl)-3-phosphoshikimate + phosphate. It participates in metabolic intermediate biosynthesis; chorismate biosynthesis; chorismate from D-erythrose 4-phosphate and phosphoenolpyruvate: step 6/7. Catalyzes the transfer of the enolpyruvyl moiety of phosphoenolpyruvate (PEP) to the 5-hydroxyl of shikimate-3-phosphate (S3P) to produce enolpyruvyl shikimate-3-phosphate and inorganic phosphate. This is 3-phosphoshikimate 1-carboxyvinyltransferase from Chlorobaculum tepidum (strain ATCC 49652 / DSM 12025 / NBRC 103806 / TLS) (Chlorobium tepidum).